Consider the following 343-residue polypeptide: Protein RecA (343 aa).

64–71 is an ATP binding site; the sequence is GPESSGKT.

This sequence belongs to the RecA family.

It is found in the cytoplasm. Can catalyze the hydrolysis of ATP in the presence of single-stranded DNA, the ATP-dependent uptake of single-stranded DNA by duplex DNA, and the ATP-dependent hybridization of homologous single-stranded DNAs. It interacts with LexA causing its activation and leading to its autocatalytic cleavage. This is Protein RecA from Bacillus cereus (strain B4264).